A 495-amino-acid polypeptide reads, in one-letter code: Adenosylhomocysteinase (495 aa).

Positions 71, 156, and 218 each coordinate substrate. An NAD(+)-binding site is contributed by 219 to 221; the sequence is TTT. Lysine 248 and aspartate 252 together coordinate substrate. Residues asparagine 253, 282-287, glutamate 305, asparagine 340, 361-363, and asparagine 409 contribute to the NAD(+) site; these read GYGDVG and IGH.

It belongs to the adenosylhomocysteinase family. NAD(+) is required as a cofactor.

The protein resides in the cytoplasm. The enzyme catalyses S-adenosyl-L-homocysteine + H2O = L-homocysteine + adenosine. It functions in the pathway amino-acid biosynthesis; L-homocysteine biosynthesis; L-homocysteine from S-adenosyl-L-homocysteine: step 1/1. In terms of biological role, may play a key role in the regulation of the intracellular concentration of adenosylhomocysteine. In Mycobacterium bovis (strain ATCC BAA-935 / AF2122/97), this protein is Adenosylhomocysteinase.